The sequence spans 370 residues: Histidinol-phosphate aminotransferase 2 (370 aa).

Lys230 is subject to N6-(pyridoxal phosphate)lysine.

It belongs to the class-II pyridoxal-phosphate-dependent aminotransferase family. Histidinol-phosphate aminotransferase subfamily. In terms of assembly, homodimer. Pyridoxal 5'-phosphate is required as a cofactor.

The enzyme catalyses L-histidinol phosphate + 2-oxoglutarate = 3-(imidazol-4-yl)-2-oxopropyl phosphate + L-glutamate. The protein operates within amino-acid biosynthesis; L-histidine biosynthesis; L-histidine from 5-phospho-alpha-D-ribose 1-diphosphate: step 7/9. In Pseudomonas fluorescens (strain ATCC BAA-477 / NRRL B-23932 / Pf-5), this protein is Histidinol-phosphate aminotransferase 2.